Reading from the N-terminus, the 337-residue chain is tRNA-dihydrouridine synthase B (337 aa).

FMN-binding positions include Pro19 to Ala21 and Gln73. The Proton donor role is filled by Cys103. FMN is bound by residues Lys142, Asn203–Asp205, and Gly227–Arg228.

The protein belongs to the Dus family. DusB subfamily. It depends on FMN as a cofactor.

The catalysed reaction is a 5,6-dihydrouridine in tRNA + NAD(+) = a uridine in tRNA + NADH + H(+). It carries out the reaction a 5,6-dihydrouridine in tRNA + NADP(+) = a uridine in tRNA + NADPH + H(+). In terms of biological role, catalyzes the synthesis of 5,6-dihydrouridine (D), a modified base found in the D-loop of most tRNAs, via the reduction of the C5-C6 double bond in target uridines. In Pseudomonas syringae pv. tomato (strain ATCC BAA-871 / DC3000), this protein is tRNA-dihydrouridine synthase B.